The primary structure comprises 304 residues: Acetaldehyde dehydrogenase 4 (304 aa).

The active-site Acyl-thioester intermediate is the Cys-131. NAD(+)-binding positions include Ser-162–Asn-170 and Asn-273.

Belongs to the acetaldehyde dehydrogenase family.

The catalysed reaction is acetaldehyde + NAD(+) + CoA = acetyl-CoA + NADH + H(+). The polypeptide is Acetaldehyde dehydrogenase 4 (Dechloromonas aromatica (strain RCB)).